The primary structure comprises 96 residues: C-C motif chemokine 20 (96 aa).

The first 26 residues, 1-26 (MMCSSKNLLLAALMSVLLLHFCSKSE), serve as a signal peptide directing secretion. 2 disulfides stabilise this stretch: cysteine 32–cysteine 58 and cysteine 33–cysteine 74.

This sequence belongs to the intercrine beta (chemokine CC) family.

It localises to the secreted. In terms of biological role, acts as a ligand for C-C chemokine receptor CCR6. Signals through binding and activation of CCR6 and induces a strong chemotactic response and mobilization of intracellular calcium ions. The ligand-receptor pair CCL20-CCR6 is responsible for the chemotaxis of dendritic cells (DC), effector/memory T-cells and B-cells and plays an important role at skin and mucosal surfaces under homeostatic and inflammatory conditions, as well as in pathology, including cancer and autoimmune diseases. CCL20 acts as a chemotactic factor that attracts lymphocytes and, slightly, neutrophils, but not monocytes. Involved in the recruitment of both the pro-inflammatory IL17 producing helper T-cells (Th17) and the regulatory T-cells (Treg) to sites of inflammation. Required for optimal migration of thymic natural regulatory T cells (nTregs) and DN1 early thymocyte progenitor cells. Positively regulates sperm motility and chemotaxis via its binding to CCR6 which triggers Ca2+ mobilization in the sperm which is important for its motility. May be involved in formation and function of the mucosal lymphoid tissues by attracting lymphocytes and dendritic cells towards epithelial cells. This Bos taurus (Bovine) protein is C-C motif chemokine 20 (CCL20).